We begin with the raw amino-acid sequence, 286 residues long: Shikimate dehydrogenase (NADP(+)) (286 aa).

Residues 21-23 and T68 each bind shikimate; that span reads TLS. K72 functions as the Proton acceptor in the catalytic mechanism. D84 is an NADP(+) binding site. Shikimate-binding residues include N93 and D108. NADP(+) contacts are provided by residues 132–136 and L226; that span reads GYGGA. Y228 provides a ligand contact to shikimate. NADP(+) is bound at residue G249.

Belongs to the shikimate dehydrogenase family. Homodimer.

It catalyses the reaction shikimate + NADP(+) = 3-dehydroshikimate + NADPH + H(+). The protein operates within metabolic intermediate biosynthesis; chorismate biosynthesis; chorismate from D-erythrose 4-phosphate and phosphoenolpyruvate: step 4/7. Involved in the biosynthesis of the chorismate, which leads to the biosynthesis of aromatic amino acids. Catalyzes the reversible NADPH linked reduction of 3-dehydroshikimate (DHSA) to yield shikimate (SA). The protein is Shikimate dehydrogenase (NADP(+)) of Thermosynechococcus vestitus (strain NIES-2133 / IAM M-273 / BP-1).